The primary structure comprises 452 residues: Maltoporin (452 aa).

Positions 1–25 are cleaved as a signal peptide; sequence MMITLRKLPLAVAVAAGVMSAQAMA.

The protein belongs to the porin LamB (TC 1.B.3) family. Homotrimer formed of three 18-stranded antiparallel beta-barrels, containing three independent channels.

Its subcellular location is the cell outer membrane. It carries out the reaction beta-maltose(in) = beta-maltose(out). In terms of biological role, involved in the transport of maltose and maltodextrins. The chain is Maltoporin from Salmonella paratyphi A (strain ATCC 9150 / SARB42).